Here is a 772-residue protein sequence, read N- to C-terminus: UDP-N-acetylmuramoyl-L-alanyl-D-glutamate--2,6-diaminopimelate ligase MurE homolog, chloroplastic (772 aa).

A chloroplast-targeting transit peptide spans M1–V40. 2 disordered regions span residues A42 to E87 and L141 to D168. Composition is skewed to acidic residues over residues A54 to E63 and E158 to D168. The residue at position 194 (S194) is a Phosphoserine.

Belongs to the MurCDEF family. MurE subfamily. In terms of assembly, component of the plastid-encoded plastid RNA polymerase (PEP) complex. In terms of tissue distribution, expressed in leaves and flowers.

It localises to the plastid. Its subcellular location is the chloroplast. Its function is as follows. Involved in chloroplast biogenesis. Required for thylakoid membrane development. Seems to be required for plastid-encoded plastid RNA polymerase (PEP)-dependent gene expression. This Arabidopsis thaliana (Mouse-ear cress) protein is UDP-N-acetylmuramoyl-L-alanyl-D-glutamate--2,6-diaminopimelate ligase MurE homolog, chloroplastic.